The chain runs to 425 residues: Serine--tRNA ligase (425 aa).

Position 233-235 (233-235 (TAE)) interacts with L-serine. Residue 264–266 (RRE) participates in ATP binding. Glu-287 contributes to the L-serine binding site. Residue 351 to 354 (EISS) coordinates ATP. Ser-387 contacts L-serine.

The protein belongs to the class-II aminoacyl-tRNA synthetase family. Type-1 seryl-tRNA synthetase subfamily. Homodimer. The tRNA molecule binds across the dimer.

Its subcellular location is the cytoplasm. It catalyses the reaction tRNA(Ser) + L-serine + ATP = L-seryl-tRNA(Ser) + AMP + diphosphate + H(+). It carries out the reaction tRNA(Sec) + L-serine + ATP = L-seryl-tRNA(Sec) + AMP + diphosphate + H(+). Its pathway is aminoacyl-tRNA biosynthesis; selenocysteinyl-tRNA(Sec) biosynthesis; L-seryl-tRNA(Sec) from L-serine and tRNA(Sec): step 1/1. Its function is as follows. Catalyzes the attachment of serine to tRNA(Ser). Is also able to aminoacylate tRNA(Sec) with serine, to form the misacylated tRNA L-seryl-tRNA(Sec), which will be further converted into selenocysteinyl-tRNA(Sec). This chain is Serine--tRNA ligase, found in Thermotoga maritima (strain ATCC 43589 / DSM 3109 / JCM 10099 / NBRC 100826 / MSB8).